Here is a 171-residue protein sequence, read N- to C-terminus: ATP synthase subunit b (171 aa).

Residues 2 to 22 (FVVKMVLGFLILLSPLCATGL) traverse the membrane as a helical segment.

Belongs to the ATPase B chain family. In terms of assembly, F-type ATPases have 2 components, F(1) - the catalytic core - and F(0) - the membrane proton channel. F(1) has five subunits: alpha(3), beta(3), gamma(1), delta(1), epsilon(1). F(0) has three main subunits: a(1), b(2) and c(10-14). The alpha and beta chains form an alternating ring which encloses part of the gamma chain. F(1) is attached to F(0) by a central stalk formed by the gamma and epsilon chains, while a peripheral stalk is formed by the delta and b chains.

The protein localises to the cell inner membrane. F(1)F(0) ATP synthase produces ATP from ADP in the presence of a proton or sodium gradient. F-type ATPases consist of two structural domains, F(1) containing the extramembraneous catalytic core and F(0) containing the membrane proton channel, linked together by a central stalk and a peripheral stalk. During catalysis, ATP synthesis in the catalytic domain of F(1) is coupled via a rotary mechanism of the central stalk subunits to proton translocation. Its function is as follows. Component of the F(0) channel, it forms part of the peripheral stalk, linking F(1) to F(0). In Helicobacter pylori (strain ATCC 700392 / 26695) (Campylobacter pylori), this protein is ATP synthase subunit b.